A 725-amino-acid chain; its full sequence is Ophiobolin F synthase (725 aa).

The tract at residues 1–322 is (7Z)-ophiobola-7,19-dien-3-ol synthase; the sequence is MEYKYSTIVD…RYHADAKFNE (322 aa). The Mg(2+) site is built by aspartate 93 and aspartate 97. Residue aspartate 93 participates in substrate binding. Residues 93-97 carry the DDXXD 1 motif; it reads DDEID. Residues 182 to 185, asparagine 226, 230 to 234, and 313 to 314 contribute to the substrate site; these read RCMD, SYEKE, and RY. The NSE/DTE motif lies at 226–234; that stretch reads NDLFSYEKE. The tract at residues 323–725 is geranylfarnesyl diphosphate synthase; sequence LQMLRAEHGV…LRMMLELLKV (403 aa). The interval 362 to 388 is disordered; that stretch reads GVNGVNGKRKRSGEETADDARTNGNGI. Over residues 373-382 the composition is skewed to basic and acidic residues; sequence SGEETADDAR. Isopentenyl diphosphate is bound by residues lysine 436, arginine 439, and histidine 468. Residues aspartate 475 and aspartate 479 each coordinate Mg(2+). Positions 475–479 match the DDXXD 2 motif; the sequence is DDIED. Arginine 484 serves as a coordination point for dimethylallyl diphosphate. Arginine 485 lines the isopentenyl diphosphate pocket. Lysine 562, threonine 563, glutamine 601, asparagine 608, lysine 618, and lysine 628 together coordinate dimethylallyl diphosphate.

It in the N-terminal section; belongs to the terpene synthase family. In the C-terminal section; belongs to the FPP/GGPP synthase family. The cofactor is Mg(2+).

It carries out the reaction isopentenyl diphosphate + (2E,6E)-farnesyl diphosphate = (2E,6E,10E)-geranylgeranyl diphosphate + diphosphate. The catalysed reaction is isopentenyl diphosphate + (2E,6E,10E)-geranylgeranyl diphosphate = (2E,6E,10E,14E)-geranylfarnesyl diphosphate + diphosphate. It catalyses the reaction (2E,6E,10E,14E)-geranylfarnesyl diphosphate + H2O = ophiobolin F + diphosphate. The protein operates within secondary metabolite biosynthesis; terpenoid biosynthesis. Bifunctional sesterterpene synthase that converts isopentenyl diphosphate (IPP) and dimethylallyl diphosphate (DMAPP) into ophiobolin F. The C-terminal prenyltransferase (PT) domain of AcldOS converts isopentenyl diphosphate and dimethylallyl diphosphate into geranylfarnesyl diphosphate (GFPP), whereas the N-terminal terpene cyclase (TC) domain catalyzes the cyclization of GFPP to ophiobolin F. This is Ophiobolin F synthase from Aspergillus calidoustus.